Consider the following 198-residue polypeptide: Recombination protein RecR (198 aa).

Residues 59–74 (CSLCCNYTDHDPCPIC) form a C4-type zinc finger. The Toprim domain occupies 82–175 (TLLCIVEQPR…KVTRIAHGLP (94 aa)).

Belongs to the RecR family.

Its function is as follows. May play a role in DNA repair. It seems to be involved in an RecBC-independent recombinational process of DNA repair. It may act with RecF and RecO. The protein is Recombination protein RecR of Desulfitobacterium hafniense (strain DSM 10664 / DCB-2).